We begin with the raw amino-acid sequence, 261 residues long: Putative imidazole glycerol phosphate synthase subunit hisF2 (261 aa).

Residue Asp-138 is part of the active site.

Belongs to the HisA/HisF family. As to quaternary structure, heterodimer of HisH and HisF.

It localises to the cytoplasm. It carries out the reaction 5-[(5-phospho-1-deoxy-D-ribulos-1-ylimino)methylamino]-1-(5-phospho-beta-D-ribosyl)imidazole-4-carboxamide + L-glutamine = D-erythro-1-(imidazol-4-yl)glycerol 3-phosphate + 5-amino-1-(5-phospho-beta-D-ribosyl)imidazole-4-carboxamide + L-glutamate + H(+). It participates in amino-acid biosynthesis; L-histidine biosynthesis; L-histidine from 5-phospho-alpha-D-ribose 1-diphosphate: step 5/9. In terms of biological role, IGPS catalyzes the conversion of PRFAR and glutamine to IGP, AICAR and glutamate. The HisF subunit catalyzes the cyclization activity that produces IGP and AICAR from PRFAR using the ammonia provided by the HisH subunit. This is Putative imidazole glycerol phosphate synthase subunit hisF2 (hisF2) from Prochlorococcus marinus (strain MIT 9313).